A 550-amino-acid chain; its full sequence is MAAKDVVFGGEARARMVEGVNILANAVKVTLGPKGRNVVLERSFGAPTVTKDGVSVAKEIELKDKLQNMGAQLVKEVASKTSDNAGDGTTTATVLAQAIVREGFKYVAAGINPMDLKRGIDKAVTALVEELKKASKPTTTSKEIAQVGSISANSDETIGKLIADAMDKVGKEGVITVEDGKSLDSELDVVEGMQFDRGYLSPYFINNPEKQSALLDNPFVLLFDKKISNIRDLLPTLEQVAKAGRPLLIIAEEVEGEALATLVVNTIRGILKVVAVKAPGFGDRRKAMLEDIAILTGGKVIAEEVGLTLEKVTLADLGQAKRIEVGKENTIIIDGSGAAADIEARVKQVRVQIEEATSDYDREKLQERVAKLAGGVAVIKVGAATEVEMKEKKARVEDALHATRAAVEEGVVAGGGVALLRAKQAVGDKVKGDNADQDAGIKLVLKAIEAPLREIVNNAGGEASVVVNAVLAGKGNYGFNAANDTYGDMLELGILDPTKVTRTALQNAASVASLLLTTEAMVADAPKEEAGAGGGMPDMGGMGGMGGMGM.

Residues 30 to 33, lysine 51, 87 to 91, glycine 415, 480 to 482, and aspartate 496 each bind ATP; these read TLGP, DGTTT, and NAA.

This sequence belongs to the chaperonin (HSP60) family. Forms a cylinder of 14 subunits composed of two heptameric rings stacked back-to-back. Interacts with the co-chaperonin GroES.

It is found in the cytoplasm. It catalyses the reaction ATP + H2O + a folded polypeptide = ADP + phosphate + an unfolded polypeptide.. Its function is as follows. Together with its co-chaperonin GroES, plays an essential role in assisting protein folding. The GroEL-GroES system forms a nano-cage that allows encapsulation of the non-native substrate proteins and provides a physical environment optimized to promote and accelerate protein folding. The polypeptide is Chaperonin GroEL (Variovorax paradoxus (strain S110)).